We begin with the raw amino-acid sequence, 491 residues long: Acetyl-coenzyme A carboxylase carboxyl transferase subunit beta, chloroplastic (491 aa).

Residues 229–491 form the CoA carboxyltransferase N-terminal domain; the sequence is LWVQCENCYG…FQLHGFFPLT (263 aa). 4 residues coordinate Zn(2+): Cys-233, Cys-236, Cys-252, and Cys-255. Residues 233–255 form a C4-type zinc finger; sequence CENCYGLNYKQFFRSRLNICEHC.

This sequence belongs to the AccD/PCCB family. Acetyl-CoA carboxylase is a heterohexamer composed of biotin carboxyl carrier protein, biotin carboxylase and 2 subunits each of ACCase subunit alpha and ACCase plastid-coded subunit beta (accD). Zn(2+) serves as cofactor.

The protein resides in the plastid. The protein localises to the chloroplast stroma. The enzyme catalyses N(6)-carboxybiotinyl-L-lysyl-[protein] + acetyl-CoA = N(6)-biotinyl-L-lysyl-[protein] + malonyl-CoA. Its pathway is lipid metabolism; malonyl-CoA biosynthesis; malonyl-CoA from acetyl-CoA: step 1/1. In terms of biological role, component of the acetyl coenzyme A carboxylase (ACC) complex. Biotin carboxylase (BC) catalyzes the carboxylation of biotin on its carrier protein (BCCP) and then the CO(2) group is transferred by the transcarboxylase to acetyl-CoA to form malonyl-CoA. This is Acetyl-coenzyme A carboxylase carboxyl transferase subunit beta, chloroplastic from Lemna minor (Common duckweed).